The following is a 447-amino-acid chain: Glutamate-1-semialdehyde 2,1-aminomutase (447 aa).

An N6-(pyridoxal phosphate)lysine modification is found at lysine 277.

Belongs to the class-III pyridoxal-phosphate-dependent aminotransferase family. HemL subfamily. As to quaternary structure, homodimer. Pyridoxal 5'-phosphate is required as a cofactor.

Its subcellular location is the cytoplasm. The enzyme catalyses (S)-4-amino-5-oxopentanoate = 5-aminolevulinate. The protein operates within porphyrin-containing compound metabolism; protoporphyrin-IX biosynthesis; 5-aminolevulinate from L-glutamyl-tRNA(Glu): step 2/2. In Arthrobacter sp. (strain FB24), this protein is Glutamate-1-semialdehyde 2,1-aminomutase.